A 94-amino-acid polypeptide reads, in one-letter code: ATP-dependent Clp protease adapter protein ClpS (94 aa).

Belongs to the ClpS family. As to quaternary structure, binds to the N-terminal domain of the chaperone ClpA.

Functionally, involved in the modulation of the specificity of the ClpAP-mediated ATP-dependent protein degradation. The polypeptide is ATP-dependent Clp protease adapter protein ClpS (Thermosynechococcus vestitus (strain NIES-2133 / IAM M-273 / BP-1)).